A 370-amino-acid chain; its full sequence is tRNA-specific 2-thiouridylase MnmA (370 aa).

ATP contacts are provided by residues 24 to 31 (AMSGGVDS) and Leu50. The active-site Nucleophile is Cys118. Residues Cys118 and Cys214 are joined by a disulfide bond. Gly142 is a binding site for ATP. Positions 164–166 (KDQ) are interaction with tRNA. The Cysteine persulfide intermediate role is filled by Cys214.

This sequence belongs to the MnmA/TRMU family.

It is found in the cytoplasm. It carries out the reaction S-sulfanyl-L-cysteinyl-[protein] + uridine(34) in tRNA + AH2 + ATP = 2-thiouridine(34) in tRNA + L-cysteinyl-[protein] + A + AMP + diphosphate + H(+). In terms of biological role, catalyzes the 2-thiolation of uridine at the wobble position (U34) of tRNA, leading to the formation of s(2)U34. In Ehrlichia ruminantium (strain Welgevonden), this protein is tRNA-specific 2-thiouridylase MnmA.